We begin with the raw amino-acid sequence, 288 residues long: Homoserine kinase (288 aa).

Position 79-89 (79-89 (PPARGLGSSSA)) interacts with ATP.

Belongs to the GHMP kinase family. Homoserine kinase subfamily.

The protein resides in the cytoplasm. It catalyses the reaction L-homoserine + ATP = O-phospho-L-homoserine + ADP + H(+). Its pathway is amino-acid biosynthesis; L-threonine biosynthesis; L-threonine from L-aspartate: step 4/5. In terms of biological role, catalyzes the ATP-dependent phosphorylation of L-homoserine to L-homoserine phosphate. In Listeria monocytogenes serovar 1/2a (strain ATCC BAA-679 / EGD-e), this protein is Homoserine kinase.